The sequence spans 313 residues: GTP cyclohydrolase MptA (313 aa).

It belongs to the GTP cyclohydrolase IV family. As to quaternary structure, homodimer. Requires Fe(2+) as cofactor.

The catalysed reaction is GTP + H2O = 7,8-dihydroneopterin 2',3'-cyclic phosphate + formate + diphosphate + H(+). The protein operates within cofactor biosynthesis; 5,6,7,8-tetrahydromethanopterin biosynthesis. In terms of biological role, converts GTP to 7,8-dihydro-D-neopterin 2',3'-cyclic phosphate, the first intermediate in the biosynthesis of coenzyme methanopterin. The polypeptide is GTP cyclohydrolase MptA (Methanoculleus marisnigri (strain ATCC 35101 / DSM 1498 / JR1)).